A 415-amino-acid chain; its full sequence is Histidine--tRNA ligase (415 aa).

This sequence belongs to the class-II aminoacyl-tRNA synthetase family. As to quaternary structure, homodimer.

It is found in the cytoplasm. The catalysed reaction is tRNA(His) + L-histidine + ATP = L-histidyl-tRNA(His) + AMP + diphosphate + H(+). This Phytoplasma australiense protein is Histidine--tRNA ligase.